Here is a 471-residue protein sequence, read N- to C-terminus: UDP-N-acetylmuramate--L-alanine ligase (471 aa).

Residue 122–128 (GTHGKTT) participates in ATP binding.

Belongs to the MurCDEF family.

It is found in the cytoplasm. The enzyme catalyses UDP-N-acetyl-alpha-D-muramate + L-alanine + ATP = UDP-N-acetyl-alpha-D-muramoyl-L-alanine + ADP + phosphate + H(+). Its pathway is cell wall biogenesis; peptidoglycan biosynthesis. Cell wall formation. The polypeptide is UDP-N-acetylmuramate--L-alanine ligase (Cutibacterium acnes (strain DSM 16379 / KPA171202) (Propionibacterium acnes)).